Reading from the N-terminus, the 1713-residue chain is Cell wall protein AWA1 (1713 aa).

Positions 1–23 are cleaved as a signal peptide; it reads MFNRFNKLQAALALVLYSQSALG. Residue Asn-34 is glycosylated (N-linked (GlcNAc...) asparagine). Disordered stretches follow at residues 80–117, 256–327, and 359–939; these read IAPSTSSSEVSSSITSSGSSVSGSSSITSSGSSVSSSS, TSTT…AESI, and SSGI…STAS. Positions 256 to 275 are enriched in low complexity; the sequence is TSTTSDTYISSSSPSQVTSS. 2 stretches are compositionally biased toward polar residues: residues 276-327 and 359-368; these read AEPT…AESI and SSGISSSVEP. A compositionally biased stretch (low complexity) spans 374-939; the sequence is PSSDESISST…QSTSSASTAS (566 aa). Residues Asn-1133, Asn-1241, and Asn-1278 are each glycosylated (N-linked (GlcNAc...) asparagine). Residues 1582–1603 are disordered; that stretch reads KTVTSEAPKETSETSETSAAPK. Ala-1692 is lipidated: GPI-anchor amidated alanine. The propeptide at 1693–1713 is removed in mature form; that stretch reads AGLNANTLNALVGIFVLAFFN.

Belongs to the SRP1/TIP1 family. The GPI-anchor is attached to the protein in the endoplasmic reticulum and serves to target the protein to the cell surface. There, the glucosamine-inositol phospholipid moiety is cleaved off and the GPI-modified mannoprotein is covalently attached via its lipidless GPI glycan remnant to the 1,6-beta-glucan of the outer cell wall layer.

It is found in the secreted. The protein localises to the cell wall. It localises to the membrane. Functionally, involved in cell wall organization and biosynthesis. Confers cell surface hydrophobicity (CSH). This chain is Cell wall protein AWA1 (AWA1), found in Saccharomyces cerevisiae (strain Kyokai no. 7 / NBRC 101557) (Baker's yeast).